We begin with the raw amino-acid sequence, 366 residues long: Beta sliding clamp (366 aa).

This sequence belongs to the beta sliding clamp family. Forms a ring-shaped head-to-tail homodimer around DNA which binds and tethers DNA polymerases and other proteins to the DNA. The DNA replisome complex has a single clamp-loading complex (3 tau and 1 each of delta, delta', psi and chi subunits) which binds 3 Pol III cores (1 core on the leading strand and 2 on the lagging strand) each with a beta sliding clamp dimer. Additional proteins in the replisome are other copies of gamma, psi and chi, Ssb, DNA helicase and RNA primase.

Its subcellular location is the cytoplasm. Functionally, confers DNA tethering and processivity to DNA polymerases and other proteins. Acts as a clamp, forming a ring around DNA (a reaction catalyzed by the clamp-loading complex) which diffuses in an ATP-independent manner freely and bidirectionally along dsDNA. Initially characterized for its ability to contact the catalytic subunit of DNA polymerase III (Pol III), a complex, multichain enzyme responsible for most of the replicative synthesis in bacteria; Pol III exhibits 3'-5' exonuclease proofreading activity. The beta chain is required for initiation of replication as well as for processivity of DNA replication. This chain is Beta sliding clamp (dnaN), found in Salmonella typhimurium (strain LT2 / SGSC1412 / ATCC 700720).